A 372-amino-acid polypeptide reads, in one-letter code: Septin-1 (372 aa).

The Septin-type G domain maps to 27 to 301 (KGFDFTLMVA…EGYRARCLQS (275 aa)). A G1 motif region spans residues 37–44 (GESGLGKS). GTP-binding positions include 37-44 (GESGLGKS), threonine 71, glycine 97, and 176-184 (KADALMPQE). The interval 94 to 97 (DTPG) is G3 motif. Residues 175–178 (GKAD) form a G4 motif region. A Phosphoserine modification is found at serine 211. 2 residues coordinate GTP: glycine 234 and arginine 250. Serine 253 bears the Phosphoserine; by AURKB mark. Threonine 256 is subject to Phosphothreonine. Phosphoserine; by AURKB occurs at positions 312 and 320. The disordered stretch occupies residues 352 to 372 (LEKMQAQMQQSQAQGEQSDAL). Residues 355 to 372 (MQAQMQQSQAQGEQSDAL) show a composition bias toward low complexity.

It belongs to the TRAFAC class TrmE-Era-EngA-EngB-Septin-like GTPase superfamily. Septin GTPase family. In terms of assembly, septins polymerize into heterooligomeric protein complexes that form filaments, and can associate with cellular membranes, actin filaments and microtubules. GTPase activity is required for filament formation. Interacts with AURKB. Expressed at high levels in lymphoid and hematopoietic tissues.

The protein resides in the cytoplasm. It is found in the cytoskeleton. It localises to the microtubule organizing center. The protein localises to the centrosome. Its subcellular location is the midbody. Filament-forming cytoskeletal GTPase. May play a role in cytokinesis (Potential). This is Septin-1 from Homo sapiens (Human).